The sequence spans 370 residues: Forkhead box protein J1.2 (370 aa).

Residues 45 to 74 (ANSRPPVPRVSQGPCSPPAGDTASCQAPRT) are disordered. The segment at residues 108–202 (KPPYSYATLI…VNGVLKRRRM (95 aa)) is a DNA-binding region (fork-head). The segment at 227–246 (PGSHHMQHISGGHRQSRRYE) is disordered.

Belongs to the FOXJ1 family.

It is found in the nucleus. Its function is as follows. Key transcription factor required for motile ciliogenesis. Activates genes essential for motile cilia formation and function. In Xenopus laevis (African clawed frog), this protein is Forkhead box protein J1.2.